Here is a 181-residue protein sequence, read N- to C-terminus: Oligoribonuclease (181 aa).

An Exonuclease domain is found at 8–171 (LIWIDLEMTG…DDIRESVAEL (164 aa)). Tyr129 is an active-site residue.

This sequence belongs to the oligoribonuclease family.

It localises to the cytoplasm. Functionally, 3'-to-5' exoribonuclease specific for small oligoribonucleotides. This Photorhabdus laumondii subsp. laumondii (strain DSM 15139 / CIP 105565 / TT01) (Photorhabdus luminescens subsp. laumondii) protein is Oligoribonuclease.